Here is a 658-residue protein sequence, read N- to C-terminus: Translation factor GUF1, mitochondrial (658 aa).

Residues 1-40 (MRGCLQTVRWLTSAWQRPPSYPPLSRAAPCRFFNVSIPRN) constitute a mitochondrion transit peptide. The 181-residue stretch at 60 to 240 (DRFRNFCIVA…TVVEQIPAPV (181 aa)) folds into the tr-type G domain. GTP contacts are provided by residues 69–76 (AHVDHGKS), 133–137 (DTPGH), and 187–190 (NKVD).

Belongs to the TRAFAC class translation factor GTPase superfamily. Classic translation factor GTPase family. LepA subfamily.

The protein resides in the mitochondrion inner membrane. The catalysed reaction is GTP + H2O = GDP + phosphate + H(+). Promotes mitochondrial protein synthesis. May act as a fidelity factor of the translation reaction, by catalyzing a one-codon backward translocation of tRNAs on improperly translocated ribosomes. Binds to mitochondrial ribosomes in a GTP-dependent manner. In Paracoccidioides brasiliensis (strain Pb18), this protein is Translation factor GUF1, mitochondrial.